We begin with the raw amino-acid sequence, 269 residues long: 3'(2'),5'-bisphosphate nucleotidase CysQ (269 aa).

Residues E69, D89, L91, D92, and D216 each contribute to the Mg(2+) site. E69 serves as a coordination point for substrate. Substrate is bound by residues 91 to 94 (LDGT) and D216.

The protein belongs to the inositol monophosphatase superfamily. CysQ family. It depends on Mg(2+) as a cofactor.

The protein resides in the cell inner membrane. It carries out the reaction adenosine 3',5'-bisphosphate + H2O = AMP + phosphate. Its function is as follows. Converts adenosine-3',5'-bisphosphate (PAP) to AMP. The sequence is that of 3'(2'),5'-bisphosphate nucleotidase CysQ from Aggregatibacter actinomycetemcomitans (Actinobacillus actinomycetemcomitans).